The chain runs to 147 residues: MNREEVTDLIVTQKVKKKLTWAQLAEVVGHSKEWSTAALLGQMTLTEAQAKAIGTTLDLPEEAVTQLQVVPYKGSLPTAVPTDPLIYRFYELISVYGTTFKSLIHEEFGDGIMSAIDFNMDLTREADPKGDRVRITMSGKFLPYKTY.

Catalysis depends on residues R88, E91, and S114.

This sequence belongs to the cyanase family.

The catalysed reaction is cyanate + hydrogencarbonate + 3 H(+) = NH4(+) + 2 CO2. Catalyzes the reaction of cyanate with bicarbonate to produce ammonia and carbon dioxide. The protein is Cyanate hydratase of Dechloromonas aromatica (strain RCB).